A 99-amino-acid polypeptide reads, in one-letter code: Signal recognition particle 19 kDa protein (99 aa).

The protein belongs to the SRP19 family. In terms of assembly, part of the signal recognition particle protein translocation system, which is composed of SRP and FtsY. Archaeal SRP consists of a 7S RNA molecule of 300 nucleotides and two protein subunits: SRP54 and SRP19.

It is found in the cytoplasm. Involved in targeting and insertion of nascent membrane proteins into the cytoplasmic membrane. Binds directly to 7S RNA and mediates binding of the 54 kDa subunit of the SRP. The sequence is that of Signal recognition particle 19 kDa protein from Ignicoccus hospitalis (strain KIN4/I / DSM 18386 / JCM 14125).